Reading from the N-terminus, the 596-residue chain is Dihydroxy-acid dehydratase pbrD, mitochondrial (596 aa).

A mitochondrion-targeting transit peptide spans 1-18 (MATSSIRSRALGLSRRAR). Residue Cys-84 participates in [2Fe-2S] cluster binding. Asp-116 lines the Mg(2+) pocket. Cys-157 serves as a coordination point for [2Fe-2S] cluster. Mg(2+) is bound at residue Asp-158. Residue Cys-230 participates in [2Fe-2S] cluster binding. Glu-483 contacts Mg(2+). Ser-509 serves as the catalytic Proton acceptor.

This sequence belongs to the IlvD/Edd family. Requires [2Fe-2S] cluster as cofactor. It depends on Mg(2+) as a cofactor.

The protein localises to the mitochondrion. It carries out the reaction (2R)-2,3-dihydroxy-3-methylbutanoate = 3-methyl-2-oxobutanoate + H2O. The enzyme catalyses (2R,3R)-2,3-dihydroxy-3-methylpentanoate = (S)-3-methyl-2-oxopentanoate + H2O. It participates in amino-acid biosynthesis; L-isoleucine biosynthesis; L-isoleucine from 2-oxobutanoate: step 3/4. Its pathway is amino-acid biosynthesis; L-valine biosynthesis; L-valine from pyruvate: step 3/4. With respect to regulation, DHAD activity is not inhibited by the dihydroxyacid dehydratase inhibitor aspterric acid (AA). Functionally, dihydroxyacid dehydratase; part of the gene cluster that mediates the biosynthesis of the sesquiterpenoid aspterric acid (AA), an inhibitor of dihydroxy-acid dehydratase (DHAD) effective as an herbicide. Performs the third step in the common pathway leading to biosynthesis of branched-chain amino acids. Catalyzes the dehydration of (2R,3R)-2,3-dihydroxy-3-methylpentanoate (2,3-dihydroxy-3-methylvalerate) into 2-oxo-3-methylpentanoate (2-oxo-3-methylvalerate) and of (2R)-2,3-dihydroxy-3-methylbutanoate (2,3-dihydroxyisovalerate) into 2-oxo-3-methylbutanoate (2-oxoisovalerate), the penultimate precursor to L-isoleucine and L-valine, respectively. PbrD confers self-resistance in the presence of the dihydroxyacid dehydratase inhibitor aspterric acid (AA) produced by the ast cluster. In Penicillium brasilianum, this protein is Dihydroxy-acid dehydratase pbrD, mitochondrial.